A 443-amino-acid polypeptide reads, in one-letter code: Xaa-Pro dipeptidase (443 aa).

The Mn(2+) site is built by aspartate 246, aspartate 257, histidine 339, glutamate 384, and glutamate 423.

This sequence belongs to the peptidase M24B family. Bacterial-type prolidase subfamily. The cofactor is Mn(2+).

It catalyses the reaction Xaa-L-Pro dipeptide + H2O = an L-alpha-amino acid + L-proline. Splits dipeptides with a prolyl residue in the C-terminal position. This Escherichia fergusonii (strain ATCC 35469 / DSM 13698 / CCUG 18766 / IAM 14443 / JCM 21226 / LMG 7866 / NBRC 102419 / NCTC 12128 / CDC 0568-73) protein is Xaa-Pro dipeptidase.